The following is a 761-amino-acid chain: Phosphoribosylformylglycinamidine synthase subunit PurL (761 aa).

The span at 1 to 13 shows a compositional bias: polar residues; the sequence is MTSRVDTVDNAAS. The segment at 1-23 is disordered; that stretch reads MTSRVDTVDNAASTPDHPQPFAE. Residue histidine 57 is part of the active site. The ATP site is built by tyrosine 60 and lysine 104. A Mg(2+)-binding site is contributed by glutamate 106. Residues 107–110 and arginine 129 contribute to the substrate site; that span reads SHNH. The active-site Proton acceptor is histidine 108. Aspartate 130 lines the Mg(2+) pocket. Glutamine 259 contributes to the substrate binding site. Position 287 (aspartate 287) interacts with Mg(2+). 331-333 serves as a coordination point for substrate; sequence ESQ. Positions 519 and 556 each coordinate ATP. Asparagine 557 serves as a coordination point for Mg(2+). Residue serine 559 participates in substrate binding.

Belongs to the FGAMS family. In terms of assembly, monomer. Part of the FGAM synthase complex composed of 1 PurL, 1 PurQ and 2 PurS subunits.

It localises to the cytoplasm. It carries out the reaction N(2)-formyl-N(1)-(5-phospho-beta-D-ribosyl)glycinamide + L-glutamine + ATP + H2O = 2-formamido-N(1)-(5-O-phospho-beta-D-ribosyl)acetamidine + L-glutamate + ADP + phosphate + H(+). The protein operates within purine metabolism; IMP biosynthesis via de novo pathway; 5-amino-1-(5-phospho-D-ribosyl)imidazole from N(2)-formyl-N(1)-(5-phospho-D-ribosyl)glycinamide: step 1/2. Its function is as follows. Part of the phosphoribosylformylglycinamidine synthase complex involved in the purines biosynthetic pathway. Catalyzes the ATP-dependent conversion of formylglycinamide ribonucleotide (FGAR) and glutamine to yield formylglycinamidine ribonucleotide (FGAM) and glutamate. The FGAM synthase complex is composed of three subunits. PurQ produces an ammonia molecule by converting glutamine to glutamate. PurL transfers the ammonia molecule to FGAR to form FGAM in an ATP-dependent manner. PurS interacts with PurQ and PurL and is thought to assist in the transfer of the ammonia molecule from PurQ to PurL. The protein is Phosphoribosylformylglycinamidine synthase subunit PurL of Mycobacteroides abscessus (strain ATCC 19977 / DSM 44196 / CCUG 20993 / CIP 104536 / JCM 13569 / NCTC 13031 / TMC 1543 / L948) (Mycobacterium abscessus).